Consider the following 174-residue polypeptide: Co-chaperone protein HscB homolog (174 aa).

A J domain is found at 2 to 74 (NYFELFSLLP…IQRAEHLLTL (73 aa)).

It belongs to the HscB family. Interacts with HscA and stimulates its ATPase activity.

Its function is as follows. Co-chaperone involved in the maturation of iron-sulfur cluster-containing proteins. Seems to help targeting proteins to be folded toward HscA. This chain is Co-chaperone protein HscB homolog, found in Shewanella halifaxensis (strain HAW-EB4).